We begin with the raw amino-acid sequence, 128 residues long: UPF0325 protein YaeH (128 aa).

This sequence belongs to the UPF0325 family.

The protein is UPF0325 protein YaeH of Escherichia fergusonii (strain ATCC 35469 / DSM 13698 / CCUG 18766 / IAM 14443 / JCM 21226 / LMG 7866 / NBRC 102419 / NCTC 12128 / CDC 0568-73).